Reading from the N-terminus, the 189-residue chain is Pyridoxal 5'-phosphate synthase subunit PdxT (189 aa).

Gly46–Ser48 is a binding site for L-glutamine. The Nucleophile role is filled by Cys78. Residues Arg107 and Ile136–Arg137 each bind L-glutamine. Residues His173 and Glu175 each act as charge relay system in the active site.

It belongs to the glutaminase PdxT/SNO family. In the presence of PdxS, forms a dodecamer of heterodimers. Only shows activity in the heterodimer.

It carries out the reaction aldehydo-D-ribose 5-phosphate + D-glyceraldehyde 3-phosphate + L-glutamine = pyridoxal 5'-phosphate + L-glutamate + phosphate + 3 H2O + H(+). It catalyses the reaction L-glutamine + H2O = L-glutamate + NH4(+). Its pathway is cofactor biosynthesis; pyridoxal 5'-phosphate biosynthesis. Catalyzes the hydrolysis of glutamine to glutamate and ammonia as part of the biosynthesis of pyridoxal 5'-phosphate. The resulting ammonia molecule is channeled to the active site of PdxS. This is Pyridoxal 5'-phosphate synthase subunit PdxT from Roseiflexus castenholzii (strain DSM 13941 / HLO8).